The chain runs to 158 residues: MGHFTFTGLCLLAMFLSLRGAECYTCPIDWLPKNGLCYKVFSKHKTWFDAEKYCRKFKPGCHLASLHSNADAVEFSEYISDYLTGRGHVWIGLRDTKKKYIWEWTDRSRTDFLPWRKNQPDHFNNNEFCVEIVNFTGYLQWNDDNCAALRPFLCQCKY.

An N-terminal signal peptide occupies residues 1–23 (MGHFTFTGLCLLAMFLSLRGAEC). Intrachain disulfides connect C26/C37, C54/C154, C61/C156, and C129/C146. The C-type lectin domain maps to 33–155 (KNGLCYKVFS…CAALRPFLCQ (123 aa)). Ca(2+) is bound by residues Q119, D121, and E127. The Galactose-binding motif lies at 119–121 (QPD). N-linked (GlcNAc...) asparagine glycosylation occurs at N134. Ca(2+) is bound by residues N142 and D143.

This sequence belongs to the true venom lectin family. Homodimer; non-covalently linked. Expressed by the venom gland.

The protein resides in the secreted. Its function is as follows. Recombinant C-type lectin BML-1 is able to agglutinate erythrocytes. May be a calcium-dependent lectin. The polypeptide is C-type lectin BML-1 (Bungarus multicinctus (Many-banded krait)).